The following is a 179-amino-acid chain: Molybdopterin synthase catalytic subunit (179 aa).

The span at 1 to 10 (MTTSEDQTTP) shows a compositional bias: polar residues. The segment at 1–21 (MTTSEDQTTPAHLDPKTYPRH) is disordered. Substrate is bound by residues 127-128 (HR), K143, and 150-152 (KRE).

This sequence belongs to the MoaE family. MOCS2B subfamily. As to quaternary structure, heterotetramer; composed of 2 small (MOCS2A) and 2 large (MOCS2B) subunits.

It localises to the cytoplasm. It carries out the reaction 2 [molybdopterin-synthase sulfur-carrier protein]-C-terminal-Gly-aminoethanethioate + cyclic pyranopterin phosphate + H2O = molybdopterin + 2 [molybdopterin-synthase sulfur-carrier protein]-C-terminal Gly-Gly + 2 H(+). It functions in the pathway cofactor biosynthesis; molybdopterin biosynthesis. In terms of biological role, catalytic subunit of the molybdopterin synthase complex, a complex that catalyzes the conversion of precursor Z into molybdopterin. Acts by mediating the incorporation of 2 sulfur atoms from thiocarboxylated MOCS2A into precursor Z to generate a dithiolene group. The sequence is that of Molybdopterin synthase catalytic subunit from Aspergillus oryzae (strain ATCC 42149 / RIB 40) (Yellow koji mold).